An 864-amino-acid polypeptide reads, in one-letter code: DNA mismatch repair protein MutS (864 aa).

607 to 614 (GPNMGGKS) is an ATP binding site.

Belongs to the DNA mismatch repair MutS family.

Functionally, this protein is involved in the repair of mismatches in DNA. It is possible that it carries out the mismatch recognition step. This protein has a weak ATPase activity. The polypeptide is DNA mismatch repair protein MutS (Neisseria meningitidis serogroup A / serotype 4A (strain DSM 15465 / Z2491)).